The chain runs to 360 residues: NAD(P)H-quinone oxidoreductase subunit 1, chloroplastic (360 aa).

9 helical membrane passes run 27-47 (IWIF…VLVI), 98-118 (FSIG…VIPF), 129-149 (IGIF…LMSG), 165-185 (AAQS…ISLL), 203-223 (FWGW…ISSL), 248-268 (YSGI…LISS), 269-289 (LFVT…ISIL), 297-317 (IFGT…FLFI), and 340-360 (FLLP…LFSL).

It belongs to the complex I subunit 1 family. As to quaternary structure, NDH is composed of at least 16 different subunits, 5 of which are encoded in the nucleus.

Its subcellular location is the plastid. It is found in the chloroplast thylakoid membrane. The catalysed reaction is a plastoquinone + NADH + (n+1) H(+)(in) = a plastoquinol + NAD(+) + n H(+)(out). It carries out the reaction a plastoquinone + NADPH + (n+1) H(+)(in) = a plastoquinol + NADP(+) + n H(+)(out). In terms of biological role, NDH shuttles electrons from NAD(P)H:plastoquinone, via FMN and iron-sulfur (Fe-S) centers, to quinones in the photosynthetic chain and possibly in a chloroplast respiratory chain. The immediate electron acceptor for the enzyme in this species is believed to be plastoquinone. Couples the redox reaction to proton translocation, and thus conserves the redox energy in a proton gradient. This is NAD(P)H-quinone oxidoreductase subunit 1, chloroplastic from Lepidium virginicum (Virginia pepperweed).